Reading from the N-terminus, the 161-residue chain is MPSFDVVSELDKHEVTNAVENAVKELDRRYDLKGKGSFEFKDKELTVNLTAEAEFQLEAMIEILKLALVKRKIDVQCLEVKDAYASGKVMKQEAVLKEGIDKELAKKIVAHIKDAKLKVQAAIQGEQVRVTGKKRDDLQEAIAALRAKEFGMPLQFNNFRD.

This sequence belongs to the YajQ family.

Nucleotide-binding protein. This is Nucleotide-binding protein PFL_4775 from Pseudomonas fluorescens (strain ATCC BAA-477 / NRRL B-23932 / Pf-5).